The primary structure comprises 82 residues: uncharacterized protein (82 aa).

The region spanning 11–82 (NVGIYVRVST…HIEQGIMTHC (72 aa)) is the Resolvase/invertase-type recombinase catalytic domain. Ser19 (O-(5'-phospho-DNA)-serine intermediate) is an active-site residue.

Belongs to the site-specific recombinase resolvase family.

This is an uncharacterized protein from Bacillus phage phi105 (Bacteriophage phi-105).